The sequence spans 228 residues: 2,3-bisphosphoglycerate-dependent phosphoglycerate mutase (228 aa).

Substrate contacts are provided by residues 8–15 (RHGQSQWN), 21–22 (TG), arginine 60, 87–90 (ERHY), lysine 98, 114–115 (RR), and 180–181 (GN). The Tele-phosphohistidine intermediate role is filled by histidine 9. Residue glutamate 87 is the Proton donor/acceptor of the active site.

It belongs to the phosphoglycerate mutase family. BPG-dependent PGAM subfamily. In terms of assembly, homodimer.

It catalyses the reaction (2R)-2-phosphoglycerate = (2R)-3-phosphoglycerate. It participates in carbohydrate degradation; glycolysis; pyruvate from D-glyceraldehyde 3-phosphate: step 3/5. Catalyzes the interconversion of 2-phosphoglycerate and 3-phosphoglycerate. The protein is 2,3-bisphosphoglycerate-dependent phosphoglycerate mutase of Erythrobacter litoralis (strain HTCC2594).